Consider the following 116-residue polypeptide: Large ribosomal subunit protein bL19 (116 aa).

It belongs to the bacterial ribosomal protein bL19 family.

In terms of biological role, this protein is located at the 30S-50S ribosomal subunit interface and may play a role in the structure and function of the aminoacyl-tRNA binding site. In Haemophilus influenzae (strain 86-028NP), this protein is Large ribosomal subunit protein bL19.